We begin with the raw amino-acid sequence, 469 residues long: MSPQTETKASVGFKAGVKDYKLTYYTPEYETLDTDILAAFRVSPQPGVPPEEAGAAVAAESSTGTWTTVWTDGLTSLDRYKGRCYHIEPVAGEENQYICYVAYPLDLFEEGSVTNMFTSIVGNVFGFKALRALRLEDLRIPVAYVKTFLGPPHGIQVERDKLNKYGRPLLGCTIKPKLGLSAKNYGRAVYECLRGGLDFTKDDENVNSQPFMRWRDRFLFCAEAINKAQAETGEIKGHYLNATAGTCEEMIKRAVFARELGVPIVMHDYLTGGFTANTSLAHYCRDNGLLLHIHRAMHAVIDRQKNHGMHFRVLAKALRLSGGDHIHAGTVVGKLEGEREITLGFVDLLRDDFTEKDRSRGIYFTQSWVSTPGVLPVASGGIHVWHMPALTEIFGDDSVLQFGGGTLGHPWGNAPGAVANRVALEACVQARNEGRDLAREGNTIIREACKWSPELAAACEVWKEIKFEF.

Positions 1-2 (MS) are excised as a propeptide. N-acetylproline is present on Pro3. Position 14 is an N6,N6,N6-trimethyllysine (Lys14). Positions 123 and 173 each coordinate substrate. Residue Lys175 is the Proton acceptor of the active site. Lys177 is a binding site for substrate. Lys201, Asp203, and Glu204 together coordinate Mg(2+). Position 201 is an N6-carboxylysine (Lys201). The active-site Proton acceptor is His294. Positions 295, 327, and 379 each coordinate substrate.

Belongs to the RuBisCO large chain family. Type I subfamily. As to quaternary structure, heterohexadecamer of 8 large chains and 8 small chains; disulfide-linked. The disulfide link is formed within the large subunit homodimers. The cofactor is Mg(2+). The disulfide bond which can form in the large chain dimeric partners within the hexadecamer appears to be associated with oxidative stress and protein turnover.

It localises to the plastid. It is found in the chloroplast. The enzyme catalyses 2 (2R)-3-phosphoglycerate + 2 H(+) = D-ribulose 1,5-bisphosphate + CO2 + H2O. It catalyses the reaction D-ribulose 1,5-bisphosphate + O2 = 2-phosphoglycolate + (2R)-3-phosphoglycerate + 2 H(+). Functionally, ruBisCO catalyzes two reactions: the carboxylation of D-ribulose 1,5-bisphosphate, the primary event in carbon dioxide fixation, as well as the oxidative fragmentation of the pentose substrate in the photorespiration process. Both reactions occur simultaneously and in competition at the same active site. The sequence is that of Ribulose bisphosphate carboxylase large chain from Dianthus caryophyllus (Carnation).